We begin with the raw amino-acid sequence, 223 residues long: Phosphoribosylformylglycinamidine synthase subunit PurQ (223 aa).

The Glutamine amidotransferase type-1 domain maps to 4 to 223 (RIGVITFPGT…FQSVLSTLVS (220 aa)). Cys-87 acts as the Nucleophile in catalysis. Residues His-195 and Glu-197 contribute to the active site.

As to quaternary structure, part of the FGAM synthase complex composed of 1 PurL, 1 PurQ and 2 PurS subunits.

It localises to the cytoplasm. It carries out the reaction N(2)-formyl-N(1)-(5-phospho-beta-D-ribosyl)glycinamide + L-glutamine + ATP + H2O = 2-formamido-N(1)-(5-O-phospho-beta-D-ribosyl)acetamidine + L-glutamate + ADP + phosphate + H(+). The catalysed reaction is L-glutamine + H2O = L-glutamate + NH4(+). It participates in purine metabolism; IMP biosynthesis via de novo pathway; 5-amino-1-(5-phospho-D-ribosyl)imidazole from N(2)-formyl-N(1)-(5-phospho-D-ribosyl)glycinamide: step 1/2. Its function is as follows. Part of the phosphoribosylformylglycinamidine synthase complex involved in the purines biosynthetic pathway. Catalyzes the ATP-dependent conversion of formylglycinamide ribonucleotide (FGAR) and glutamine to yield formylglycinamidine ribonucleotide (FGAM) and glutamate. The FGAM synthase complex is composed of three subunits. PurQ produces an ammonia molecule by converting glutamine to glutamate. PurL transfers the ammonia molecule to FGAR to form FGAM in an ATP-dependent manner. PurS interacts with PurQ and PurL and is thought to assist in the transfer of the ammonia molecule from PurQ to PurL. This Corynebacterium jeikeium (strain K411) protein is Phosphoribosylformylglycinamidine synthase subunit PurQ.